The sequence spans 75 residues: Transcription attenuation protein MtrB (75 aa).

It belongs to the MtrB family. In terms of assembly, oligomer of 11 identical subunits arranged in doughnut-like structure.

Functionally, required for transcription attenuation control in the Trp operon. This trans-acting factor seems to recognize a 10 bases nucleotide sequence in the Trp leader transcript causing transcription termination. Binds the leader RNA only in presence of L-tryptophan. The protein is Transcription attenuation protein MtrB of Bacillus velezensis (strain DSM 23117 / BGSC 10A6 / LMG 26770 / FZB42) (Bacillus amyloliquefaciens subsp. plantarum).